Consider the following 352-residue polypeptide: 4-hydroxy-2-oxovalerate aldolase (352 aa).

A Pyruvate carboxyltransferase domain is found at 14-266 (VRMTDTSLRD…KTGIDFFDIA (253 aa)). 22-23 (RD) serves as a coordination point for substrate. Asp-23 contacts Mn(2+). His-26 serves as the catalytic Proton acceptor. The substrate site is built by Ser-176 and His-205. Residues His-205 and His-207 each contribute to the Mn(2+) site. Tyr-296 is a substrate binding site.

The protein belongs to the 4-hydroxy-2-oxovalerate aldolase family.

The enzyme catalyses (S)-4-hydroxy-2-oxopentanoate = acetaldehyde + pyruvate. This is 4-hydroxy-2-oxovalerate aldolase from Mycolicibacterium gilvum (strain PYR-GCK) (Mycobacterium gilvum (strain PYR-GCK)).